The chain runs to 227 residues: Cytochrome c oxidase subunit 2 (227 aa).

Residues methionine 1–serine 14 lie on the Mitochondrial intermembrane side of the membrane. The helical transmembrane segment at proline 15–methionine 45 threads the bilayer. Topologically, residues leucine 46–glutamine 59 are mitochondrial matrix. Residues glutamate 60 to methionine 87 form a helical membrane-spanning segment. Residues aspartate 88 to leucine 227 are Mitochondrial intermembrane-facing. Cu cation contacts are provided by histidine 161, cysteine 196, glutamate 198, cysteine 200, histidine 204, and methionine 207. Glutamate 198 lines the Mg(2+) pocket.

This sequence belongs to the cytochrome c oxidase subunit 2 family. In terms of assembly, component of the cytochrome c oxidase (complex IV, CIV), a multisubunit enzyme composed of 14 subunits. The complex is composed of a catalytic core of 3 subunits MT-CO1, MT-CO2 and MT-CO3, encoded in the mitochondrial DNA, and 11 supernumerary subunits COX4I, COX5A, COX5B, COX6A, COX6B, COX6C, COX7A, COX7B, COX7C, COX8 and NDUFA4, which are encoded in the nuclear genome. The complex exists as a monomer or a dimer and forms supercomplexes (SCs) in the inner mitochondrial membrane with NADH-ubiquinone oxidoreductase (complex I, CI) and ubiquinol-cytochrome c oxidoreductase (cytochrome b-c1 complex, complex III, CIII), resulting in different assemblies (supercomplex SCI(1)III(2)IV(1) and megacomplex MCI(2)III(2)IV(2)). Found in a complex with TMEM177, COA6, COX18, COX20, SCO1 and SCO2. Interacts with TMEM177 in a COX20-dependent manner. Interacts with COX20. Interacts with COX16. It depends on Cu cation as a cofactor.

It localises to the mitochondrion inner membrane. The catalysed reaction is 4 Fe(II)-[cytochrome c] + O2 + 8 H(+)(in) = 4 Fe(III)-[cytochrome c] + 2 H2O + 4 H(+)(out). Component of the cytochrome c oxidase, the last enzyme in the mitochondrial electron transport chain which drives oxidative phosphorylation. The respiratory chain contains 3 multisubunit complexes succinate dehydrogenase (complex II, CII), ubiquinol-cytochrome c oxidoreductase (cytochrome b-c1 complex, complex III, CIII) and cytochrome c oxidase (complex IV, CIV), that cooperate to transfer electrons derived from NADH and succinate to molecular oxygen, creating an electrochemical gradient over the inner membrane that drives transmembrane transport and the ATP synthase. Cytochrome c oxidase is the component of the respiratory chain that catalyzes the reduction of oxygen to water. Electrons originating from reduced cytochrome c in the intermembrane space (IMS) are transferred via the dinuclear copper A center (CU(A)) of subunit 2 and heme A of subunit 1 to the active site in subunit 1, a binuclear center (BNC) formed by heme A3 and copper B (CU(B)). The BNC reduces molecular oxygen to 2 water molecules using 4 electrons from cytochrome c in the IMS and 4 protons from the mitochondrial matrix. In Hapalemur griseus (Gray gentle lemur), this protein is Cytochrome c oxidase subunit 2 (MT-CO2).